We begin with the raw amino-acid sequence, 170 residues long: MPTKSIKIMVEGGNVKPGPPLAPTLSQLGLNVGEVVKKLNEATSSFKGMSVPVTIEVDSNTKKYEIKVGIPTTTALLLKEAGASEPSGDPAHKKIGNLSLEQVIKIAIMKKPGLTTKSLKAAVKSMLGTAKSIGVTVENKDPKELVKEVEEGKYDDLLAKYENEWNEVKE.

It belongs to the universal ribosomal protein uL11 family. As to quaternary structure, part of the ribosomal stalk of the 50S ribosomal subunit. Interacts with L10 and the large rRNA to form the base of the stalk. L10 forms an elongated spine to which L12 dimers bind in a sequential fashion forming a multimeric L10(L12)X complex.

Functionally, forms part of the ribosomal stalk which helps the ribosome interact with GTP-bound translation factors. This Saccharolobus islandicus (strain M.16.27) (Sulfolobus islandicus) protein is Large ribosomal subunit protein uL11.